The chain runs to 246 residues: Nodulation protein G (246 aa).

8–32 (VTGAMGGLGTAICQALAKDGCIVAA) is a binding site for NAD(+). Ser140 provides a ligand contact to substrate. The active-site Proton acceptor is Tyr153.

Belongs to the short-chain dehydrogenases/reductases (SDR) family.

Proposed to modify Nod factor fatty acyl chain. The protein is Nodulation protein G (nodG) of Azospirillum brasilense.